Here is a 154-residue protein sequence, read N- to C-terminus: Cathelicidin-2 (154 aa).

An N-terminal signal peptide occupies residues 1-17 (MLSCWVLLLALLGGVCA). Residues 18-122 (LPAPLSYPQA…RCRDASSDPV (105 aa)) constitute a propeptide that is removed on maturation. 2 cysteine pairs are disulfide-bonded: C75–C86 and C97–C114.

Belongs to the cathelicidin family. Detected in trachea, lung, proventriculus, duodenum, jejunum, ileum, caeca, colon, caecal tonsil, bursa of Fabricius, kidney, ovary, testis, thymus, liver, spleen, bone marrow, skin, uropygial gland, muscle and brain.

It localises to the secreted. Functionally, binds bacterial lipopolysaccharide (LPS). Has potent antimicrobial activity against Gram-positive and Gram-negative bacteria (in vitro). Has hemolytic activity (in vitro). May play a role in the innate immune response. This is Cathelicidin-2 (CATHL2) from Gallus gallus (Chicken).